The chain runs to 508 residues: Photosystem II CP47 reaction center protein (508 aa).

The next 6 helical transmembrane spans lie at 21–36 (AVHI…WAGS), 101–115 (IVFS…IWHW), 140–156 (GIHL…FGAF), 203–218 (IAAG…FHLS), 237–252 (VLSS…AFVV), and 457–472 (SFAL…HGAR).

Belongs to the PsbB/PsbC family. PsbB subfamily. As to quaternary structure, PSII is composed of 1 copy each of membrane proteins PsbA, PsbB, PsbC, PsbD, PsbE, PsbF, PsbH, PsbI, PsbJ, PsbK, PsbL, PsbM, PsbT, PsbX, PsbY, PsbZ, Psb30/Ycf12, at least 3 peripheral proteins of the oxygen-evolving complex and a large number of cofactors. It forms dimeric complexes. Interacts with PAM68. Interacts with HHL1. Requires Binds multiple chlorophylls. PSII binds additional chlorophylls, carotenoids and specific lipids. as cofactor.

The protein localises to the plastid. It is found in the chloroplast thylakoid membrane. Its function is as follows. One of the components of the core complex of photosystem II (PSII). It binds chlorophyll and helps catalyze the primary light-induced photochemical processes of PSII. PSII is a light-driven water:plastoquinone oxidoreductase, using light energy to abstract electrons from H(2)O, generating O(2) and a proton gradient subsequently used for ATP formation. This Arabidopsis thaliana (Mouse-ear cress) protein is Photosystem II CP47 reaction center protein.